We begin with the raw amino-acid sequence, 351 residues long: Outer membrane porin protein 32 (351 aa).

A signal peptide spans 1-19; that stretch reads MKKSLIALAVLAASGAAMA. Position 20 is a pyrrolidone carboxylic acid (Q20).

It to bacterial outer membrane proteins and porins. Homotrimer.

The protein resides in the cell outer membrane. Functionally, forms anion selective channels. This chain is Outer membrane porin protein 32 (omp32), found in Delftia acidovorans (Pseudomonas acidovorans).